Consider the following 419-residue polypeptide: UDP-N-acetylglucosamine 1-carboxyvinyltransferase (419 aa).

22–23 (KN) lines the phosphoenolpyruvate pocket. Arginine 93 is a binding site for UDP-N-acetyl-alpha-D-glucosamine. Cysteine 117 acts as the Proton donor in catalysis. A 2-(S-cysteinyl)pyruvic acid O-phosphothioketal modification is found at cysteine 117. Residues aspartate 306 and valine 328 each coordinate UDP-N-acetyl-alpha-D-glucosamine.

Belongs to the EPSP synthase family. MurA subfamily.

It is found in the cytoplasm. The catalysed reaction is phosphoenolpyruvate + UDP-N-acetyl-alpha-D-glucosamine = UDP-N-acetyl-3-O-(1-carboxyvinyl)-alpha-D-glucosamine + phosphate. The protein operates within cell wall biogenesis; peptidoglycan biosynthesis. Functionally, cell wall formation. Adds enolpyruvyl to UDP-N-acetylglucosamine. The chain is UDP-N-acetylglucosamine 1-carboxyvinyltransferase from Thioalkalivibrio sulfidiphilus (strain HL-EbGR7).